We begin with the raw amino-acid sequence, 629 residues long: tRNA uridine 5-carboxymethylaminomethyl modification enzyme MnmG (629 aa).

13 to 18 is a binding site for FAD; that stretch reads GGGHAG. Position 273–287 (273–287) interacts with NAD(+); it reads GPRYCPSIEDKIHRF.

This sequence belongs to the MnmG family. In terms of assembly, homodimer. Heterotetramer of two MnmE and two MnmG subunits. FAD is required as a cofactor.

It is found in the cytoplasm. NAD-binding protein involved in the addition of a carboxymethylaminomethyl (cmnm) group at the wobble position (U34) of certain tRNAs, forming tRNA-cmnm(5)s(2)U34. The protein is tRNA uridine 5-carboxymethylaminomethyl modification enzyme MnmG of Shewanella baltica (strain OS195).